A 352-amino-acid chain; its full sequence is Selenide, water dikinase (352 aa).

Cysteine 21 is an active-site residue. Residues lysine 24 and 51 to 53 (TND) contribute to the ATP site. Aspartate 54 contacts Mg(2+). Residues aspartate 71, aspartate 94, and 141–143 (GHS) contribute to the ATP site. A Mg(2+)-binding site is contributed by aspartate 94. Aspartate 231 lines the Mg(2+) pocket.

Belongs to the selenophosphate synthase 1 family. Class I subfamily. Homodimer. Mg(2+) serves as cofactor.

The catalysed reaction is hydrogenselenide + ATP + H2O = selenophosphate + AMP + phosphate + 2 H(+). Synthesizes selenophosphate from selenide and ATP. The protein is Selenide, water dikinase of Myxococcus xanthus (strain DK1622).